A 114-amino-acid polypeptide reads, in one-letter code: T cell receptor beta variable 4-1 (114 aa).

Residues 1–21 (MGCRLLCCAVLCLLGAVPIDT) form the signal peptide. An Ig-like domain is found at 22 to 114 (EVTQTPKHLV…SALYLCASSQ (93 aa)). A disulfide bond links C42 and C110. Residues N76 and N89 are each glycosylated (N-linked (GlcNAc...) asparagine).

Alpha-beta TR is a heterodimer composed of an alpha and beta chain; disulfide-linked. The alpha-beta TR is associated with the transmembrane signaling CD3 coreceptor proteins to form the TR-CD3 (TcR or TCR). The assembly of alpha-beta TR heterodimers with CD3 occurs in the endoplasmic reticulum where a single alpha-beta TR heterodimer associates with one CD3D-CD3E heterodimer, one CD3G-CD3E heterodimer and one CD247 homodimer forming a stable octameric structure. CD3D-CD3E and CD3G-CD3E heterodimers preferentially associate with TR alpha and TR beta chains, respectively. The association of the CD247 homodimer is the last step of TcR assembly in the endoplasmic reticulum and is required for transport to the cell surface.

It is found in the cell membrane. Its function is as follows. V region of the variable domain of T cell receptor (TR) beta chain that participates in the antigen recognition. Alpha-beta T cell receptors are antigen specific receptors which are essential to the immune response and are present on the cell surface of T lymphocytes. Recognize peptide-major histocompatibility (MH) (pMH) complexes that are displayed by antigen presenting cells (APC), a prerequisite for efficient T cell adaptive immunity against pathogens. Binding of alpha-beta TR to pMH complex initiates TR-CD3 clustering on the cell surface and intracellular activation of LCK that phosphorylates the ITAM motifs of CD3G, CD3D, CD3E and CD247 enabling the recruitment of ZAP70. In turn ZAP70 phosphorylates LAT, which recruits numerous signaling molecules to form the LAT signalosome. The LAT signalosome propagates signal branching to three major signaling pathways, the calcium, the mitogen-activated protein kinase (MAPK) kinase and the nuclear factor NF-kappa-B (NF-kB) pathways, leading to the mobilization of transcription factors that are critical for gene expression and essential for T cell growth and differentiation. The T cell repertoire is generated in the thymus, by V-(D)-J rearrangement. This repertoire is then shaped by intrathymic selection events to generate a peripheral T cell pool of self-MH restricted, non-autoaggressive T cells. Post-thymic interaction of alpha-beta TR with the pMH complexes shapes TR structural and functional avidity. The protein is T cell receptor beta variable 4-1 of Homo sapiens (Human).